We begin with the raw amino-acid sequence, 646 residues long: FAD-binding monooxygenase prhK (646 aa).

An N-linked (GlcNAc...) asparagine glycan is attached at asparagine 46. The chain crosses the membrane as a helical span at residues isoleucine 80–isoleucine 97. FAD contacts are provided by residues threonine 119–tryptophan 122, aspartate 131–threonine 132, and tyrosine 137. Position 129 to 131 (methionine 129 to aspartate 131) interacts with NADP(+). NADP(+) is bound by residues threonine 275 to glutamine 281 and arginine 298 to threonine 299. N-linked (GlcNAc...) asparagine glycans are attached at residues asparagine 429, asparagine 483, and asparagine 529.

The protein belongs to the FAD-binding monooxygenase family. FAD serves as cofactor.

It localises to the membrane. The catalysed reaction is preaustinoid A + AH2 + O2 = preaustinoid A1 + A + H2O. It participates in secondary metabolite biosynthesis; terpenoid biosynthesis. In terms of biological role, FAD-binding monooxygenase; part of the gene cluster that mediates the biosynthesis of paraherquonin, a meroterpenoid with a unique, highly congested hexacyclic molecular architecture. The first step of the pathway is the synthesis of 3,5-dimethylorsellinic acid (DMOA) by the polyketide synthase prhL. Synthesis of DMOA is followed by farnesylation by the prenyltransferase prhE, methylesterification by the methyl-transferase prhM, epoxidation of the prenyl chain by the flavin-dependent monooxygenase prhF, and cyclization of the farnesyl moiety by the terpene cyclase prhH, to yield the tetracyclic intermediate, protoaustinoid A. The short chain dehydrogenase prhI then oxidizes the C-3 alcohol group of the terpene cyclase product to transform protoaustinoid A into protoaustinoid B. The FAD-binding monooxygenase prhJ catalyzes the oxidation of protoaustinoid B into preaustinoid A which is further oxidized into preaustinoid A1 by FAD-binding monooxygenase phrK. Finally, prhA leads to berkeleydione via the berkeleyone B intermediate. PrhA is a multifunctional dioxygenase that first desaturates at C5-C6 to form berkeleyone B, followed by rearrangement of the A/B-ring to form the cycloheptadiene moiety in berkeleydione. Berkeleydione serves as the key intermediate for the biosynthesis of paraherquonin as well as many other meroterpenoids. The cytochrome P450 monooxygenases prhB, prhD, and prhN, as well as the isomerase prhC, are probably involved in the late stage of paraherquonin biosynthesis, after the production of berkeleydione. Especially prhC might be a multifunctional enzyme that catalyzes the D-ring expansion via intramolecular methoxy rearrangement, as well as the hydrolysis of the expanded D-ring. The protein is FAD-binding monooxygenase prhK of Penicillium brasilianum.